The chain runs to 382 residues: Lipid-A-disaccharide synthase (382 aa).

This sequence belongs to the LpxB family.

It carries out the reaction 2-N,3-O-bis[(3R)-3-hydroxytetradecanoyl]-alpha-D-glucosaminyl 1-phosphate + UDP-2-N,3-O-bis[(3R)-3-hydroxytetradecanoyl]-alpha-D-glucosamine = lipid A disaccharide (E. coli) + UDP + H(+). It catalyses the reaction a lipid X + a UDP-2-N,3-O-bis[(3R)-3-hydroxyacyl]-alpha-D-glucosamine = a lipid A disaccharide + UDP + H(+). Its pathway is glycolipid biosynthesis; lipid IV(A) biosynthesis; lipid IV(A) from (3R)-3-hydroxytetradecanoyl-[acyl-carrier-protein] and UDP-N-acetyl-alpha-D-glucosamine: step 5/6. Its function is as follows. Condensation of UDP-2,3-diacylglucosamine and 2,3-diacylglucosamine-1-phosphate to form lipid A disaccharide, a precursor of lipid A, a phosphorylated glycolipid that anchors the lipopolysaccharide to the outer membrane of the cell. This Salmonella paratyphi B (strain ATCC BAA-1250 / SPB7) protein is Lipid-A-disaccharide synthase.